The following is a 203-amino-acid chain: NADH dehydrogenase [ubiquinone] 1 alpha subcomplex assembly factor 4 (203 aa).

This sequence belongs to the NDUFAF4 family. In terms of assembly, together with NdufAF3 associates with mitochondrial complex I assembly intermediates during its biogenesis.

Functionally, involved in the assembly of mitochondrial NADH:ubiquinone oxidoreductase complex (complex I). Together with NdufAF3, involved in biogenesis of complex 1 modules N, Q and P-peripheral, but not the P-distal module. Required for recruitment of the complex I assembly factor Timmdc1 to complex 1 assembly intermediates. The polypeptide is NADH dehydrogenase [ubiquinone] 1 alpha subcomplex assembly factor 4 (Drosophila melanogaster (Fruit fly)).